The chain runs to 340 residues: Nuclear hormone receptor family member nhr-268 (340 aa).

Residues 1 to 75 (MNCLVCSARA…IGMKAASKND (75 aa)) constitute a DNA-binding region (nuclear receptor). NR C4-type zinc fingers lie at residues 3 to 23 (CLVCSARAFNRNYGVMSCFAC) and 39 to 58 (CKYFKNCTIHYKTHPKCRAC). The NR LBD domain occupies 98 to 337 (KNDKNYSNFI…KRLMQDIFSH (240 aa)).

It belongs to the nuclear hormone receptor family.

The protein localises to the nucleus. Functionally, orphan nuclear receptor. The sequence is that of Nuclear hormone receptor family member nhr-268 (nhr-268) from Caenorhabditis elegans.